We begin with the raw amino-acid sequence, 186 residues long: Akirin-1A (186 aa).

The tract at residues glutamate 14–leucine 65 is disordered. Over residues glutamine 49–glycine 60 the composition is skewed to low complexity. Positions serine 183–serine 186 match the SYVS motif motif.

This sequence belongs to the akirin family.

It localises to the nucleus. Molecular adapter that acts as a bridge between proteins, and which is involved skeletal muscle development. Functions as a signal transducer for MSTN during skeletal muscle regeneration and myogenesis. This Xenopus laevis (African clawed frog) protein is Akirin-1A (akirin1-a).